The sequence spans 599 residues: Beta-glucuronidase (599 aa).

D160 and N407 together coordinate D-glucuronate. Catalysis depends on E408, which acts as the Proton donor. D-glucuronate-binding residues include N462, Y468, E501, W546, and K565. E501 acts as the Nucleophile in catalysis. An N-K motif motif is present at residues N563–K565.

Belongs to the glycosyl hydrolase 2 family.

The catalysed reaction is a beta-D-glucuronoside + H2O = D-glucuronate + an alcohol. Its activity is regulated as follows. Inhibited by a set of synthetic compounds like thio-urea derivatives and analogs. Inhibitors of gut microbial beta-glucuronidases are expected to block the reactivation of glucuronidated cancer drugs, and to alleviate drug-induced GI toxicity. In terms of biological role, displays beta-glucuronidase activity with the artificial substrate p-nitrophenyl-beta-D-glucuronide (PNPG). Is likely capable of scavenging glucuronate from a range of chemically distinct xenobiotic and endobiotic glucuronides present in the gastrointestinal (GI) tract, to be able to utilize these diverse sources of carbon. As part of the GI microbiome, this enzyme would be able to reactivate glucuronide drug conjugates, such reactivated compounds can significantly damage the GI tract. This is Beta-glucuronidase from Streptococcus agalactiae serotype V (strain ATCC BAA-611 / 2603 V/R).